The following is a 269-amino-acid chain: 4-chlorobenzoyl coenzyme A dehalogenase (269 aa).

Residues R24 and 62 to 67 contribute to the substrate site; that span reads AGFYLR. Residue H90 is the Proton acceptor of the active site. Position 114 (G114) interacts with substrate. D145 serves as the catalytic Nucleophile. A substrate-binding site is contributed by R257.

Belongs to the enoyl-CoA hydratase/isomerase family. Homotetramer. Homotetramer, homooctamer and larger multimers. Homotrimer.

The enzyme catalyses 4-chlorobenzoyl-CoA + H2O = 4-hydroxybenzoyl-CoA + chloride + H(+). It functions in the pathway xenobiotic degradation; 4-chlorobenzoate degradation; 4-hydroxybenzoate from 4-chlorobenzoate: step 2/3. With respect to regulation, inactivated by 1 mM Ag(+) and by 5 mM Cu(2+). Partially inhibited by 5 mM Zn(2+), Mn(2+), Co(2+), Fe(2+) and Ni(2+). Unaffected by 10 mM Na(+), K(+) and Li(+) and by 0.5 mM Mg(2+), Mn(2+), Fe(2+), Ca(2+), Co(2+) and Zn(2+). Inhibited by the sulfhydryl blocking agent 5,5'-dithio-bis-(2-nitrobenzoate), SDS and N-bromosuccinimide. Unaffected by sodium azide and EDTA. Inactivated following treatment with diethyl pyrocarbonate; this inactivation is reversible by treatment with hydroxylamine. In terms of biological role, dehalogenates 4-chlorobenzoyl-CoA, 4-iodobenzoyl-CoA and 4-bromobenzoyl-CoA, but not 4-fluorobenzoyl-CoA. Inactive towards crotonyl-CoA, alpha-methylcrotonyl-CoA and beta-methylcrotonyl-CoA. The chain is 4-chlorobenzoyl coenzyme A dehalogenase from Pseudomonas sp. (strain CBS-3).